The sequence spans 110 residues: U32-theraphotoxin-Cg1a (110 aa).

A signal peptide spans M1–S19. The propeptide occupies L20–R43. 4 disulfide bridges follow: C49/C63, C56/C69, C60/C105, and C62/C80.

It belongs to the neurotoxin 03 (Tx2) family. 02 subfamily. Expressed by the venom gland.

The protein resides in the secreted. Probable ion channel inhibitor. This is U32-theraphotoxin-Cg1a from Chilobrachys guangxiensis (Chinese earth tiger tarantula).